We begin with the raw amino-acid sequence, 727 residues long: MSVLPDRQVINQLISGHYGDPFSILGMHETSQGLQICALLPDAREVWLVETENGRRIAQLTLEDPRGFFIAQLTRRKKSFRYQFAVTWQESPQIIEDPYRFGPLLQDIDSWLLAEGTHLRPYERLGAHLMSLDGVSGVSFAVWAPNAQRVSVVGDFNFWDGRRHPMRLRRENGIWELFLPGIEAGQLYKFEIIDCHGQVRLKADPYAFEAQMRPETASLISPLPDVVKSSAARQKANDLCSPVSIYEVHLGSWRRHTDNNFWLSYRELADQLVEYVKYMGFTHVELLPINEHPFDGSWGYQPLGLYAPTRRYGTPEDFKAFVAKFHQAGINVILDWVPGHFPSDEHGLSTFDGTALYEYADPREGYHQDWNTLIYNYGRNEVRNYLAGNAFYWMERFGIDALRIDAVASMIYRDYSRAEGQWVPNYYGGRENLEAIAFLRYTNKTIGVERPGSVTMAEESTDFPGVTLPPDIGGLGFNYKWNMGWMHDTLNYMQCDPVHRKYHHNLMTFGMLYAYTENFILPLSHDEVVHGKRSILDRMPGDAWQKFANLRAYYAFMWAHPGKKLLFMGCEFAQGREWNFETSLDWHLLDDENGWHSGVQRLVRDLNHCYRQYAPLYEWDYQPAGFEWLVVDDHENSVFAFLRRDAEGHELIAISNFTPVPRYHYRVGIPQGGHYREVLNSDSAFYCGSNLGNQGGIDSHHVRSHNHEHSLLLTLPPLATIYLLREN.

D405 acts as the Nucleophile in catalysis. Catalysis depends on E458, which acts as the Proton donor.

This sequence belongs to the glycosyl hydrolase 13 family. GlgB subfamily. As to quaternary structure, monomer.

The enzyme catalyses Transfers a segment of a (1-&gt;4)-alpha-D-glucan chain to a primary hydroxy group in a similar glucan chain.. It participates in glycan biosynthesis; glycogen biosynthesis. In terms of biological role, catalyzes the formation of the alpha-1,6-glucosidic linkages in glycogen by scission of a 1,4-alpha-linked oligosaccharide from growing alpha-1,4-glucan chains and the subsequent attachment of the oligosaccharide to the alpha-1,6 position. The sequence is that of 1,4-alpha-glucan branching enzyme GlgB from Yersinia pseudotuberculosis serotype I (strain IP32953).